The sequence spans 348 residues: Trans-L-3-hydroxyproline dehydratase (348 aa).

Cysteine 101 serves as the catalytic Proton acceptor. Substrate is bound by residues 102-103 (GH), aspartate 263, and 268-269 (GS).

It belongs to the proline racemase family. Homodimer.

The enzyme catalyses trans-3-hydroxy-L-proline = 1-pyrroline-2-carboxylate + H2O. Its function is as follows. Catalyzes the dehydration of trans-3-hydroxy-L-proline to delta-1-pyrroline-2-carboxylate (Pyr2C). The chain is Trans-L-3-hydroxyproline dehydratase (l3hypdh) from Xenopus tropicalis (Western clawed frog).